A 242-amino-acid polypeptide reads, in one-letter code: tRNA pseudouridine synthase A (242 aa).

Residue aspartate 51 is the Nucleophile of the active site. Tyrosine 107 is a binding site for substrate.

Belongs to the tRNA pseudouridine synthase TruA family. Homodimer.

The catalysed reaction is uridine(38/39/40) in tRNA = pseudouridine(38/39/40) in tRNA. Its function is as follows. Formation of pseudouridine at positions 38, 39 and 40 in the anticodon stem and loop of transfer RNAs. This is tRNA pseudouridine synthase A from Helicobacter pylori (strain ATCC 700392 / 26695) (Campylobacter pylori).